We begin with the raw amino-acid sequence, 518 residues long: Probable protein phosphatase 2C 14 (518 aa).

Composition is skewed to low complexity over residues 1-10 (MVEAAAGRRS) and 86-105 (PQRQ…APGA). Disordered regions lie at residues 1–31 (MVEA…QQHQ) and 86–108 (PQRQ…ADGR). Positions 129–437 (VASLYTLQGK…DDCAVVCLFL (309 aa)) constitute a PPM-type phosphatase domain. 2 residues coordinate Mn(2+): D165 and G166. The segment at 192–222 (TDEGRQTSTSSIKSNGDETGSPGNMGRDAEQ) is disordered. A compositionally biased stretch (polar residues) spans 197–213 (QTSTSSIKSNGDETGSP). D382 and D428 together coordinate Mn(2+).

This sequence belongs to the PP2C family. Requires Mg(2+) as cofactor. It depends on Mn(2+) as a cofactor.

It catalyses the reaction O-phospho-L-seryl-[protein] + H2O = L-seryl-[protein] + phosphate. The catalysed reaction is O-phospho-L-threonyl-[protein] + H2O = L-threonyl-[protein] + phosphate. The polypeptide is Probable protein phosphatase 2C 14 (Oryza sativa subsp. japonica (Rice)).